The chain runs to 611 residues: UvrABC system protein C (611 aa).

A GIY-YIG domain is found at 6 to 84; that stretch reads NNPGVYRMFN…IKRLRPRFNV (79 aa). Residues 194 to 229 enclose the UVR domain; that stretch reads QSVKDHLAAAMQAASADLDFEHAAVYRDRLAALSHV.

The protein belongs to the UvrC family. Interacts with UvrB in an incision complex.

It is found in the cytoplasm. Its function is as follows. The UvrABC repair system catalyzes the recognition and processing of DNA lesions. UvrC both incises the 5' and 3' sides of the lesion. The N-terminal half is responsible for the 3' incision and the C-terminal half is responsible for the 5' incision. The sequence is that of UvrABC system protein C from Brucella abortus (strain 2308).